We begin with the raw amino-acid sequence, 142 residues long: Ribonuclease VapC44 (142 aa).

Residues 4 to 126 (LLDVNVLLAL…GRFVTFDQSI (123 aa)) form the PINc domain. The Mg(2+) site is built by aspartate 6 and aspartate 105.

Belongs to the PINc/VapC protein family. Mg(2+) serves as cofactor.

Functionally, toxic component of a type II toxin-antitoxin (TA) system. An RNase. Its cognate antitoxin is VapB44. This is Ribonuclease VapC44 from Mycobacterium tuberculosis (strain CDC 1551 / Oshkosh).